Reading from the N-terminus, the 902-residue chain is Glycogen phosphorylase (902 aa).

The segment at 1 to 21 is disordered; it reads MPPASTSTTNDMITEEPTSPH. At Thr31 the chain carries Phosphothreonine. Ser333 is subject to Phosphoserine. Lys751 carries the post-translational modification N6-(pyridoxal phosphate)lysine.

This sequence belongs to the glycogen phosphorylase family. In terms of assembly, homodimer. Requires pyridoxal 5'-phosphate as cofactor.

The protein localises to the cytoplasm. Its subcellular location is the cytosol. The enzyme catalyses [(1-&gt;4)-alpha-D-glucosyl](n) + phosphate = [(1-&gt;4)-alpha-D-glucosyl](n-1) + alpha-D-glucose 1-phosphate. Its activity is regulated as follows. Activated by phosphorylation of Thr-31. In terms of biological role, phosphorylase is an important allosteric enzyme in carbohydrate metabolism. Enzymes from different sources differ in their regulatory mechanisms and in their natural substrates. However, all known phosphorylases share catalytic and structural properties. This Saccharomyces cerevisiae (strain ATCC 204508 / S288c) (Baker's yeast) protein is Glycogen phosphorylase (GPH1).